The sequence spans 69 residues: DNA-directed RNA polymerase subunit epsilon (69 aa).

The protein belongs to the RNA polymerase subunit epsilon family. As to quaternary structure, RNAP is composed of a core of 2 alpha, a beta and a beta' subunit. The core is associated with a delta subunit, and at least one of epsilon or omega. When a sigma factor is associated with the core the holoenzyme is formed, which can initiate transcription.

The enzyme catalyses RNA(n) + a ribonucleoside 5'-triphosphate = RNA(n+1) + diphosphate. Its function is as follows. A non-essential component of RNA polymerase (RNAP). This Listeria welshimeri serovar 6b (strain ATCC 35897 / DSM 20650 / CCUG 15529 / CIP 8149 / NCTC 11857 / SLCC 5334 / V8) protein is DNA-directed RNA polymerase subunit epsilon.